The chain runs to 311 residues: RNA polymerase sigma factor SigA4 (311 aa).

The tract at residues 78–148 (MLKANLRLVV…TRAIDNHART (71 aa)) is sigma-70 factor domain-2. The Interaction with polymerase core subunit RpoC motif lies at 102–105 (DLIQ). A sigma-70 factor domain-3 region spans residues 157–234 (EKISRIKKMT…DPKSLEPMDA (78 aa)). A sigma-70 factor domain-4 region spans residues 247 to 304 (WLAHLTEREQQVLQLRFGLHDGEQHTLAEIGRRLNVSRERIRQVEARALQKLRVLSQQ). The segment at residues 273-292 (LAEIGRRLNVSRERIRQVEA) is a DNA-binding region (H-T-H motif).

The protein belongs to the sigma-70 factor family.

It localises to the cytoplasm. In terms of biological role, sigma factors are initiation factors that promote the attachment of RNA polymerase to specific initiation sites and are then released. This chain is RNA polymerase sigma factor SigA4 (sigA4), found in Synechococcus elongatus (strain ATCC 33912 / PCC 7942 / FACHB-805) (Anacystis nidulans R2).